Consider the following 354-residue polypeptide: GTPase Obg (354 aa).

An Obg domain is found at 1-159 (MKFLDQCKIY…RWIWLRLKLI (159 aa)). Positions 160 to 328 (ADVGLVGLPN…LLRAAYKQVR (169 aa)) constitute an OBG-type G domain. GTP contacts are provided by residues 166 to 173 (GLPNAGKS), 191 to 195 (FTTLT), 213 to 216 (DIPG), 280 to 283 (NKID), and 309 to 311 (SGV). Ser-173 and Thr-193 together coordinate Mg(2+). Positions 335–345 (EEEIDDDEDHV) are enriched in acidic residues. The segment at 335–354 (EEEIDDDEDHVDETPGGWTP) is disordered.

The protein belongs to the TRAFAC class OBG-HflX-like GTPase superfamily. OBG GTPase family. As to quaternary structure, monomer. The cofactor is Mg(2+).

It localises to the cytoplasm. In terms of biological role, an essential GTPase which binds GTP, GDP and possibly (p)ppGpp with moderate affinity, with high nucleotide exchange rates and a fairly low GTP hydrolysis rate. Plays a role in control of the cell cycle, stress response, ribosome biogenesis and in those bacteria that undergo differentiation, in morphogenesis control. The protein is GTPase Obg of Caulobacter vibrioides (strain ATCC 19089 / CIP 103742 / CB 15) (Caulobacter crescentus).